The primary structure comprises 333 residues: MYSLLRPLLFRLDAEKAHSLTLSLLHYLPGFYFRKIAGQPVHAMGLVFPHQVGLAAGLDKNGEHLDALAKLGFSFIELGTVTPKGQAGNPKPRLFRIAEANAIINRMGFNNSGVDVLVENVKRANYKGILGINIGKNKETNLNQAAEDYLYCFRKVYDHASYVTINISSPNTPDLRQLQQGDYFAELLTQLQKEQIKLADQYGRHVPLVVKVSPDETDETLKQMTDIILQYGIEGIIATNTTCSREMVKNLPCSEEQGGLSGRPLMELSTRCLRLLKQYVGNDVTLIGVGGIDSLESAKDKINAGASLLQVYSGLVYKGPELIHDIVSGLNAI.

Residues 56–60 and threonine 80 each bind FMN; that span reads AGLDK. Lysine 60 serves as a coordination point for substrate. Residue 105 to 109 participates in substrate binding; the sequence is NRMGF. Positions 133 and 166 each coordinate FMN. Asparagine 166 provides a ligand contact to substrate. The Nucleophile role is filled by serine 169. Residue asparagine 171 participates in substrate binding. Positions 211 and 239 each coordinate FMN. Position 240 to 241 (240 to 241) interacts with substrate; it reads NT. FMN contacts are provided by residues glycine 262, glycine 291, and 312–313; that span reads YS.

This sequence belongs to the dihydroorotate dehydrogenase family. Type 2 subfamily. Monomer. The cofactor is FMN.

The protein localises to the cell membrane. The catalysed reaction is (S)-dihydroorotate + a quinone = orotate + a quinol. Its pathway is pyrimidine metabolism; UMP biosynthesis via de novo pathway; orotate from (S)-dihydroorotate (quinone route): step 1/1. Functionally, catalyzes the conversion of dihydroorotate to orotate with quinone as electron acceptor. The protein is Dihydroorotate dehydrogenase (quinone) of Legionella pneumophila (strain Corby).